The following is an 814-amino-acid chain: ATP-dependent RNA helicase dbp-7 (814 aa).

Residues 26-102 are disordered; it reads GGRWRDRVKA…PPPPPTHAMK (77 aa). Basic and acidic residues-rich tracts occupy residues 28-42 and 69-78; these read RWRD…EKGG and QRTEDGDSGR. Residues 145 to 174 carry the Q motif motif; the sequence is ENFLSLGLSRRVSQHLATKLEMKAPTAIQK. Positions 178–384 constitute a Helicase ATP-binding domain; that stretch reads PQLVKEDSDA…EISLEDAVHI (207 aa). 191-198 lines the ATP pocket; the sequence is AETGSGKT. The DEAD box signature appears at 313–316; the sequence is DEGD. The region spanning 422 to 622 is the Helicase C-terminal domain; it reads RLVTLIALLK…GFATNINVPG (201 aa). Disordered regions lie at residues 464 to 483, 662 to 695, and 741 to 795; these read TPRA…KPNI, ESKS…PLLV, and GIGG…AGRR. Positions 467–477 are enriched in basic and acidic residues; the sequence is AEPEPKPEGEA. Over residues 779-790 the composition is skewed to acidic residues; it reads DDDERDFGAADE.

It belongs to the DEAD box helicase family. DDX31/DBP7 subfamily.

It is found in the nucleus. Its subcellular location is the nucleolus. It carries out the reaction ATP + H2O = ADP + phosphate + H(+). ATP-binding RNA helicase involved in the biogenesis of 60S ribosomal subunits and is required for the normal formation of 25S and 5.8S rRNAs. In Neurospora crassa (strain ATCC 24698 / 74-OR23-1A / CBS 708.71 / DSM 1257 / FGSC 987), this protein is ATP-dependent RNA helicase dbp-7 (dbp-7).